Here is a 354-residue protein sequence, read N- to C-terminus: Tribbles homolog 3 (354 aa).

Residues 1-127 (MRATPLAASA…QHVARPTEVL (127 aa)) form an interaction with DDIT3/CHOP region. The disordered stretch occupies residues 36–61 (RDEPEPGPLPSLLPPSPPPASDLSPA). Residues 41-55 (PGPLPSLLPPSPPPA) show a composition bias toward pro residues. A Protein kinase domain is found at 68–315 (LGPYILLERE…ALGILLHPWL (248 aa)). The span at 320–333 (GRVSPPQSDRREMD) shows a compositional bias: basic and acidic residues. The tract at residues 320-354 (GRVSPPQSDRREMDQVVPDGPQLEEAEEGEVGLYG) is disordered. Residues 341-354 (QLEEAEEGEVGLYG) are compositionally biased toward acidic residues.

This sequence belongs to the protein kinase superfamily. CAMK Ser/Thr protein kinase family. Tribbles subfamily. In terms of assembly, interacts with AKT1, AKT2, MAP2K1 and MAP2K7. Interacts with ATF4. Interacts with DDIT3/CHOP and inhibits its interaction with EP300/P300. Interacts with APOBEC3C. Interacts (via N-terminus) with APOBEC3A. Interacts with RELA. In terms of tissue distribution, highly expressed in liver. Not detected in heart, brain, spleen, lung, skeletal muscle, kidney or testis.

The protein resides in the nucleus. Its function is as follows. Inactive protein kinase which acts as a regulator of the integrated stress response (ISR), a process for adaptation to various stress. Inhibits the transcriptional activity of DDIT3/CHOP and is involved in DDIT3/CHOP-dependent cell death during ER stress. May play a role in programmed neuronal cell death but does not appear to affect non-neuronal cells. Acts as a negative feedback regulator of the ATF4-dependent transcription during the ISR: while TRIB3 expression is promoted by ATF4, TRIB3 protein interacts with ATF4 and inhibits ATF4 transcription activity. Disrupts insulin signaling by binding directly to Akt kinases and blocking their activation. May bind directly to and mask the 'Thr-308' phosphorylation site in AKT1. Interacts with the NF-kappa-B transactivator p65 RELA and inhibits its phosphorylation and thus its transcriptional activation activity. Interacts with MAPK kinases and regulates activation of MAP kinases. Can inhibit APOBEC3A editing of nuclear DNA. This chain is Tribbles homolog 3 (Trib3), found in Mus musculus (Mouse).